A 60-amino-acid polypeptide reads, in one-letter code: Photosystem II reaction center protein L (60 aa).

Residues 39–59 traverse the membrane as a helical segment; that stretch reads SLYWGLLLIFVLAVLFSSYIF.

This sequence belongs to the PsbL family. As to quaternary structure, PSII is composed of 1 copy each of membrane proteins PsbA, PsbB, PsbC, PsbD, PsbE, PsbF, PsbH, PsbI, PsbJ, PsbK, PsbL, PsbM, PsbT, PsbX, PsbY, PsbZ, Psb30/Ycf12, at least 3 peripheral proteins of the oxygen-evolving complex and a large number of cofactors. It forms dimeric complexes.

The protein localises to the plastid. It is found in the chloroplast thylakoid membrane. One of the components of the core complex of photosystem II (PSII). PSII is a light-driven water:plastoquinone oxidoreductase that uses light energy to abstract electrons from H(2)O, generating O(2) and a proton gradient subsequently used for ATP formation. It consists of a core antenna complex that captures photons, and an electron transfer chain that converts photonic excitation into a charge separation. This subunit is found at the monomer-monomer interface and is required for correct PSII assembly and/or dimerization. In Oedogonium cardiacum (Filamentous green alga), this protein is Photosystem II reaction center protein L.